We begin with the raw amino-acid sequence, 46 residues long: Mu-segestritoxin-Sf1b (46 aa).

4 cysteine pairs are disulfide-bonded: Cys-3–Cys-19, Cys-10–Cys-22, Cys-18–Cys-42, and Cys-24–Cys-40. The tract at residues 31–33 (RPW) is keys region for toxin activity.

The protein belongs to the neurotoxin 16 (SFI) family. As to expression, expressed by the venom gland.

The protein localises to the secreted. Functionally, insecticidal toxin. Causes flaccid paralysis followed by death when injected into Heliothis virescens larvae. Does not induce any toxic effects when injected intravenously into adult mice at a dose of 1.25 mg/kg body weight. The polypeptide is Mu-segestritoxin-Sf1b (Segestria florentina (Tube-web spider)).